The primary structure comprises 401 residues: uncharacterized protein (401 aa).

7 consecutive transmembrane segments (helical) span residues 44 to 64, 69 to 89, 99 to 119, 130 to 150, 201 to 221, 246 to 266, and 286 to 306; these read LKYTIVYILALVNAFFLLVFI, LYSFGISSLTQGFARLLFVLL, LVFNIFYWLFYVIVNIPLIIF, ILSTHYVVASNVFGFIFSIIP, FIYAGIYGFVNGTSLAILYIL, ILFYVNTFILIIAILMGSFVA, and LFFSPNLIATFFSVLFTGTVV.

It is found in the cell membrane. This is an uncharacterized protein from Mycoplasma pneumoniae (strain ATCC 29342 / M129 / Subtype 1) (Mycoplasmoides pneumoniae).